A 450-amino-acid chain; its full sequence is ATP-dependent protease ATPase subunit HslU (450 aa).

Residues valine 29, 71 to 76 (GVGKTE), aspartate 261, glutamate 328, and arginine 400 each bind ATP.

Belongs to the ClpX chaperone family. HslU subfamily. A double ring-shaped homohexamer of HslV is capped on each side by a ring-shaped HslU homohexamer. The assembly of the HslU/HslV complex is dependent on binding of ATP.

It localises to the cytoplasm. Its function is as follows. ATPase subunit of a proteasome-like degradation complex; this subunit has chaperone activity. The binding of ATP and its subsequent hydrolysis by HslU are essential for unfolding of protein substrates subsequently hydrolyzed by HslV. HslU recognizes the N-terminal part of its protein substrates and unfolds these before they are guided to HslV for hydrolysis. This chain is ATP-dependent protease ATPase subunit HslU, found in Rickettsia peacockii (strain Rustic).